A 134-amino-acid chain; its full sequence is Cytochrome b5 (134 aa).

A Cytochrome b5 heme-binding domain is found at 5–81; sequence KKVLGFEEVS…MEKYYIGEID (77 aa). Heme contacts are provided by H40 and H64. A helical membrane pass occupies residues 107–127; that stretch reads FMIKILQFLVPILILGLALVV.

Belongs to the cytochrome b5 family.

Its subcellular location is the endoplasmic reticulum membrane. The protein localises to the microsome membrane. Its function is as follows. Membrane bound hemoprotein which function as an electron carrier for several membrane bound oxygenases. This chain is Cytochrome b5 (CYB5), found in Brassica oleracea var. botrytis (Cauliflower).